The following is a 503-amino-acid chain: Cobyric acid synthase (503 aa).

The 194-residue stretch at 260–453 (KIGVAAIYFP…FHALFDESSV (194 aa)) folds into the GATase cobBQ-type domain. Cys-341 acts as the Nucleophile in catalysis. Residue His-445 is part of the active site.

It belongs to the CobB/CobQ family. CobQ subfamily.

It functions in the pathway cofactor biosynthesis; adenosylcobalamin biosynthesis. Functionally, catalyzes amidations at positions B, D, E, and G on adenosylcobyrinic A,C-diamide. NH(2) groups are provided by glutamine, and one molecule of ATP is hydrogenolyzed for each amidation. The polypeptide is Cobyric acid synthase (Pelodictyon phaeoclathratiforme (strain DSM 5477 / BU-1)).